A 701-amino-acid polypeptide reads, in one-letter code: Octapeptide-repeat antigen (701 aa).

Residues Asn40, Asn41, Asn76, Asn111, Asn127, Asn139, Asn181, Asn189, Asn311, Asn334, Asn344, Asn477, and Asn557 are each glycosylated (N-linked (GlcNAc...) asparagine). Residues 120–140 (IENEEKSNGSRKSSNKQKYNE) form a disordered region. Residues 641 to 701 (LSGSSTGSMN…IKSGSKDHIK (61 aa)) form a disordered region. Residues 642-655 (SGSSTGSMNNGKSG) are compositionally biased toward low complexity. Repeat copies occupy residues 653-660 (KSGSKSDI), 661-668 (KGGSKDDI), 669-676 (KSGSKDDI), 677-684 (KSGSKADI), 685-692 (KSGSKDDI), and 693-700 (KSGSKDHI). A 6 X 8 AA approximate tandem repeats region spans residues 653-700 (KSGSKSDIKGGSKDDIKSGSKDDIKSGSKADIKSGSKDDIKSGSKDHI). Residues 656-701 (SKSDIKGGSKDDIKSGSKDDIKSGSKADIKSGSKDDIKSGSKDHIK) show a composition bias toward basic and acidic residues.

This sequence belongs to the ATP-dependent AMP-binding enzyme family.

It is found in the parasitophorous vacuole. In Plasmodium falciparum (isolate NF7 / Ghana), this protein is Octapeptide-repeat antigen.